Reading from the N-terminus, the 1870-residue chain is Dedicator of cytokinesis protein 5 (1870 aa).

One can recognise an SH3 domain in the interval 8–69 (KRQKYGVAIY…PETYIHLKEA (62 aa)). A Phosphoserine modification is found at S365. A C2 DOCK-type domain is found at 443–627 (RNDIYVTLIH…DSFQIATLIC (185 aa)). An N6-acetyllysine modification is found at K818. A DOCKER domain is found at 1231 to 1642 (YKEKKREDIY…VEKHYGVITL (412 aa)). Positions 1679–1702 (VVSTSSNSSDNAPSRPGSDGSILE) are disordered. Residues S1756, S1766, S1785, and S1789 each carry the phosphoserine modification. Residues 1772–1870 (NRLSPFHGSS…GIPTSEPGSQ (99 aa)) are disordered. Residues 1784 to 1794 (QSTPLSPPPLT) show a composition bias toward pro residues. T1794 is subject to Phosphothreonine. Over residues 1797–1808 (ATRTLSSPSLQT) the composition is skewed to polar residues. The residue at position 1814 (T1814) is a Phosphothreonine. Residues 1815–1824 (PVPPPPPPKS) show a composition bias toward pro residues. Phosphoserine is present on residues S1834 and S1869.

Belongs to the DOCK family. In terms of assembly, interacts with CRK and CRKL. Interacts (via N-terminus) with tensin TNS3 (via N-terminus); the interaction increases DOCK5 guanine nucleotide exchange activity towards Rac. Interacts with ELMO1.

The protein resides in the cytoplasm. Its subcellular location is the cell membrane. The protein localises to the cell projection. It is found in the podosome. Guanine nucleotide exchange factor (GEF) for Rho and Rac. GEF proteins activate small GTPases by exchanging bound GDP for free GTP. Along with DOCK1, mediates CRK/CRKL regulation of epithelial and endothelial cell spreading and migration on type IV collagen. This chain is Dedicator of cytokinesis protein 5 (DOCK5), found in Homo sapiens (Human).